The chain runs to 38 residues: Glutathione S-transferase 2 (38 aa).

This sequence belongs to the GST superfamily. Phi family.

It carries out the reaction RX + glutathione = an S-substituted glutathione + a halide anion + H(+). Conjugation of reduced glutathione to a wide number of exogenous and endogenous hydrophobic electrophiles. In plants, may have a detoxification role against certain herbicides. This Populus euphratica (Euphrates poplar) protein is Glutathione S-transferase 2.